The primary structure comprises 475 residues: Argininosuccinate lyase 1 (475 aa).

Belongs to the lyase 1 family. Argininosuccinate lyase subfamily.

The protein localises to the cytoplasm. It catalyses the reaction 2-(N(omega)-L-arginino)succinate = fumarate + L-arginine. The protein operates within amino-acid biosynthesis; L-arginine biosynthesis; L-arginine from L-ornithine and carbamoyl phosphate: step 3/3. The chain is Argininosuccinate lyase 1 from Pseudomonas fluorescens (strain Pf0-1).